Reading from the N-terminus, the 950-residue chain is 5'-3' exoribonuclease 2 (950 aa).

A CCHC-type zinc finger spans residues 262–278 (PCGLCNQFGHEVKDCEG). An N6-acetyllysine modification is found at K286. The disordered stretch occupies residues 408 to 508 (KDDEDSFRRR…SDSEPEPEDN (101 aa)). Basic residues predominate over residues 416–426 (RRQKEKRKRMK). Phosphothreonine is present on T439. Polar residues predominate over residues 445–458 (SRNSPGSQVASNPR). Phosphoserine occurs at positions 448, 471, 473, 475, 482, 487, 499, 501, and 678. A compositionally biased stretch (low complexity) spans 468-482 (NNSSPSISPNTSFTS). Asymmetric dimethylarginine; alternate is present on residues R824, R847, and R851. An omega-N-methylarginine; alternate mark is found at R824, R847, and R851. R880 carries the post-translational modification Asymmetric dimethylarginine. At R883 the chain carries Asymmetric dimethylarginine; alternate. R883 carries the post-translational modification Omega-N-methylarginine; alternate. R895 bears the Omega-N-methylarginine mark. The interval 911 to 950 (MLAGPGGYPPRRDDRGGRQGYPREGRKYPLPPPSGRYNWN) is disordered. The span at 920–937 (PRRDDRGGRQGYPREGRK) shows a compositional bias: basic and acidic residues. The residue at position 946 (R946) is an Asymmetric dimethylarginine; alternate. An Omega-N-methylarginine; alternate modification is found at R946.

This sequence belongs to the 5'-3' exonuclease family. XRN2/RAT1 subfamily. Interacts with POLR2A and SMN1/SMN2. Interacts with CDKN2AIP and NKRF. Interacts with CDKN2AIPNL; the interaction is direct. Interacts with TRIM71 (via NHL repeats) in an RNA-dependent manner. Interacts with DHX34; the interaction is RNA-independent. Expressed in the spleen, thymus, prostate, testis, ovary, small intestine, colon, peripheral blood leukocytes, heart, brain, placenta, lung, liver, skeletal muscle, kidney, and pancreas. Isoform 2 is expressed predominantly in peripheral blood leukocytes.

The protein resides in the nucleus. It is found in the nucleolus. Its function is as follows. Possesses 5'-&gt;3' exoribonuclease activity. May promote the termination of transcription by RNA polymerase II. During transcription termination, cleavage at the polyadenylation site liberates a 5' fragment which is subsequently processed to form the mature mRNA and a 3' fragment which remains attached to the elongating polymerase. The processive degradation of this 3' fragment by this protein may promote termination of transcription. Binds to RNA polymerase II (RNAp II) transcription termination R-loops formed by G-rich pause sites. The protein is 5'-3' exoribonuclease 2 (XRN2) of Homo sapiens (Human).